The following is a 263-amino-acid chain: 5'-nucleotidase SurE (263 aa).

Aspartate 21, aspartate 22, serine 52, and asparagine 105 together coordinate a divalent metal cation.

Belongs to the SurE nucleotidase family. A divalent metal cation serves as cofactor.

It is found in the cytoplasm. The catalysed reaction is a ribonucleoside 5'-phosphate + H2O = a ribonucleoside + phosphate. Its function is as follows. Nucleotidase that shows phosphatase activity on nucleoside 5'-monophosphates. The polypeptide is 5'-nucleotidase SurE (Vibrio cholerae serotype O1 (strain ATCC 39541 / Classical Ogawa 395 / O395)).